The primary structure comprises 441 residues: Probable dihydroorotase-like protein (441 aa).

Residues 121–140 (VNAHHQPPGDPQAENRPDSA) form a disordered region.

Belongs to the metallo-dependent hydrolases superfamily. DHOase family. PyrC' subfamily.

Non-functional DHOase. This chain is Probable dihydroorotase-like protein (pyrC'), found in Synechocystis sp. (strain ATCC 27184 / PCC 6803 / Kazusa).